The following is a 364-amino-acid chain: Medium-wave-sensitive opsin 1 (364 aa).

The tract at residues 1-24 (MAQRWDPQRLAGGQPQDSHEDSTQ) is disordered. At 1–52 (MAQRWDPQRLAGGQPQDSHEDSTQSSIFTYTNSNATRGPFEGPNYHIAPRWV) the chain is on the extracellular side. Positions 17–43 (DSHEDSTQSSIFTYTNSNATRGPFEGP) are required for 11-cis-retinal regeneration. The N-linked (GlcNAc...) asparagine glycan is linked to asparagine 34. Residues 53 to 77 (YHITSTWMIIVVIASVFTNGLVLVA) traverse the membrane as a helical segment. At 78–89 (TMKFKKLRHPLN) the chain is on the cytoplasmic side. A helical transmembrane segment spans residues 90-115 (WILVNLAIADLAETVIASTISVVNQL). At 116-129 (YGYFVLGHPLCVVE) the chain is on the extracellular side. A disulfide bridge links cysteine 126 with cysteine 203. Residues 130–149 (GYTVSVCGITGLWSLAIISW) form a helical membrane-spanning segment. At 150 to 168 (ERWLVVCKPFGNMRFDAKL) the chain is on the cytoplasmic side. The chain crosses the membrane as a helical span at residues 169 to 192 (AIVGIAFSWIWSAVWTAPPIFGWS). The Extracellular segment spans residues 193–218 (RYWPYGLKTSCGPDVFSGTSYPGVQS). A helical transmembrane segment spans residues 219 to 246 (YMMVLMVTCCIIPLSIIILCYLQVWLAI). Residues 247–268 (RAVAKQQKESESTQKAEKEVTR) lie on the Cytoplasmic side of the membrane. A helical transmembrane segment spans residues 269–292 (MVVVMVFAYCLCWGPYTFFACFAT). The Extracellular portion of the chain corresponds to 293-300 (ANPGYAFH). The chain crosses the membrane as a helical span at residues 301–320 (PLVAALPAYFAKSATIYNPI). Lysine 312 carries the post-translational modification N6-(retinylidene)lysine. The Cytoplasmic segment spans residues 321 to 364 (IYVFMNRQFRNCILQLFGKKVDDTSELSSASKTEASSVSSVSPA).

The protein belongs to the G-protein coupled receptor 1 family. Opsin subfamily. As to quaternary structure, monomer. Homodimer. Homotetramer. Post-translationally, O-glycosylated. In terms of processing, phosphorylated on some or all of the serine and threonine residues present in the C-terminal region. As to expression, expressed in cone photoreceptor cells.

Its subcellular location is the membrane. Its function is as follows. Visual pigments are the light-absorbing molecules that mediate vision. They consist of an apoprotein, opsin, covalently linked to cis-retinal. May increase spectral sensitivity in dim light. The protein is Medium-wave-sensitive opsin 1 (OPN1MW) of Sciurus carolinensis (Eastern gray squirrel).